Here is a 248-residue protein sequence, read N- to C-terminus: Granzyme B (248 aa).

Positions 1–18 (MKLLLLLLSFSLAPKTEA) are cleaved as a signal peptide. The propeptide at 19–20 (GE) is activation peptide. Positions 21 to 246 (IIGGHEAKPH…FLSWIKKTMK (226 aa)) constitute a Peptidase S1 domain. A disulfide bond links cysteine 50 and cysteine 66. Catalysis depends on charge relay system residues histidine 65 and aspartate 109. Disulfide bonds link cysteine 143–cysteine 210 and cysteine 174–cysteine 189. The active-site Charge relay system is the serine 204.

Belongs to the peptidase S1 family. Granzyme subfamily.

It localises to the secreted. The protein resides in the cytolytic granule. It catalyses the reaction Preferential cleavage: -Asp-|-Xaa- &gt;&gt; -Asn-|-Xaa- &gt; -Met-|-Xaa-, -Ser-|-Xaa-.. With respect to regulation, inactivated by the serine protease inhibitor diisopropylfluorophosphate. Functionally, abundant protease in the cytosolic granules of cytotoxic T-cells and NK-cells which activates caspase-independent pyroptosis when delivered into the target cell through the immunological synapse. It cleaves after Asp. Once delivered into the target cell, acts by catalyzing cleavage of gasdermin-E (GSDME), releasing the pore-forming moiety of GSDME, thereby triggering pyroptosis and target cell death. Seems to be linked to an activation cascade of caspases (aspartate-specific cysteine proteases) responsible for apoptosis execution. Cleaves caspase-3 and -9 (CASP3 and CASP9, respectively) to give rise to active enzymes mediating apoptosis. Cleaves and activates CASP7 in response to bacterial infection, promoting plasma membrane repair. The polypeptide is Granzyme B (Gzmb) (Rattus norvegicus (Rat)).